The following is a 107-amino-acid chain: uncharacterized protein (107 aa).

The chain crosses the membrane as a helical span at residues 13–33; the sequence is VLIVTFLSSFIFIVWLPVALV.

The protein resides in the membrane. This is an uncharacterized protein from Saccharomyces cerevisiae (strain ATCC 204508 / S288c) (Baker's yeast).